The primary structure comprises 874 residues: Alanine--tRNA ligase (874 aa).

Positions 562, 566, 665, and 669 each coordinate Zn(2+).

It belongs to the class-II aminoacyl-tRNA synthetase family. It depends on Zn(2+) as a cofactor.

It localises to the cytoplasm. The catalysed reaction is tRNA(Ala) + L-alanine + ATP = L-alanyl-tRNA(Ala) + AMP + diphosphate. Functionally, catalyzes the attachment of alanine to tRNA(Ala) in a two-step reaction: alanine is first activated by ATP to form Ala-AMP and then transferred to the acceptor end of tRNA(Ala). Also edits incorrectly charged Ser-tRNA(Ala) and Gly-tRNA(Ala) via its editing domain. The polypeptide is Alanine--tRNA ligase (Pseudomonas syringae pv. tomato (strain ATCC BAA-871 / DC3000)).